A 122-amino-acid chain; its full sequence is Large ribosomal subunit protein uL14 (122 aa).

Belongs to the universal ribosomal protein uL14 family. In terms of assembly, part of the 50S ribosomal subunit. Forms a cluster with proteins L3 and L19. In the 70S ribosome, L14 and L19 interact and together make contacts with the 16S rRNA in bridges B5 and B8.

Functionally, binds to 23S rRNA. Forms part of two intersubunit bridges in the 70S ribosome. This chain is Large ribosomal subunit protein uL14, found in Chloroflexus aggregans (strain MD-66 / DSM 9485).